A 195-amino-acid polypeptide reads, in one-letter code: Calcineurin B homologous protein 1 (195 aa).

A lipid anchor (N-myristoyl glycine) is attached at Gly2. EF-hand domains are found at residues 26-61, 66-101, 110-145, and 151-186; these read SQIT…AINP, IINA…KSKD, SRSN…MVGV, and QLGS…VDVE. Asp123, Asp125, Asp127, Lys129, Glu134, Asp164, Asp166, Asp168, and Glu175 together coordinate Ca(2+).

Belongs to the calcineurin regulatory subunit family. CHP subfamily. In terms of assembly, monomer. Phosphorylated. In terms of processing, calcium-binding or N-myristoylation are necessary for the Na(+)/H(+) exchange activities.

The protein localises to the nucleus. It is found in the cytoplasm. It localises to the cytoskeleton. Its subcellular location is the endomembrane system. The protein resides in the endoplasmic reticulum-Golgi intermediate compartment. The protein localises to the endoplasmic reticulum. It is found in the cell membrane. It localises to the membrane. Calcium-binding protein involved in different processes such as regulation of vesicular trafficking, plasma membrane Na(+)/H(+) exchanger and gene transcription. Involved in the constitutive exocytic membrane traffic. Mediates the association between microtubules and membrane-bound organelles of the endoplasmic reticulum and Golgi apparatus and is also required for the targeting and fusion of transcytotic vesicles (TCV) with the plasma membrane. Functions as an integral cofactor in cell pH regulation by controlling plasma membrane-type Na(+)/H(+) exchange activity. Inhibits serum- and GTPase-stimulated Na(+)/H(+) exchange. Plays a role as an inhibitor of ribosomal RNA transcription. Acts as a negative regulator of the calcineurin/NFAT signaling pathway. This chain is Calcineurin B homologous protein 1 (CHP1), found in Gallus gallus (Chicken).